Reading from the N-terminus, the 1597-residue chain is Protein STU1 (1597 aa).

4 disordered regions span residues 220 to 265 (GNSS…PSSS), 519 to 958 (DKVN…RPIH), 1005 to 1154 (DAEA…ELNT), and 1307 to 1332 (SQRP…SSLV). Positions 535 to 552 (APRESLKEVMRRSRESSV) are enriched in basic and acidic residues. Residues 577–605 (SSGLVGRSLSGSNLTDRSNRLSSTSTSSR) show a composition bias toward low complexity. Polar residues-rich tracts occupy residues 610 to 622 (AVSD…QMTR) and 632 to 645 (PSLT…SLTR). Basic and acidic residues-rich tracts occupy residues 660-673 (GSRE…DQNR) and 694-708 (ESSR…DPSR). Residues 709 to 726 (ESSLAPSVHSSTAISRES) are compositionally biased toward polar residues. A compositionally biased stretch (low complexity) spans 765–781 (EETMNEVTTAEATATTA). Polar residues-rich tracts occupy residues 791 to 801 (PRESTPPNSSP) and 808 to 822 (PATQ…TGKS). Over residues 832–846 (ELSRDLNGESKHLKE) the composition is skewed to basic and acidic residues. 3 stretches are compositionally biased toward polar residues: residues 918 to 933 (DSQS…QSEP), 1013 to 1025 (TEQT…SDTA), and 1036 to 1045 (NSEQGPSTEP). The segment covering 1081-1091 (ASDEIETDHTK) has biased composition (basic and acidic residues). Over residues 1108-1119 (EPMEICDSDNDA) the composition is skewed to acidic residues. Over residues 1122-1139 (NGTNPDTKCQDQQDSTTP) the composition is skewed to polar residues. Residues 1537–1573 (PSYETQLLALITELISDPDPLVRRVTVGLVVRVLRVS) form an HEAT repeat.

This sequence belongs to the CLASP family. As to quaternary structure, interacts with microtubules.

It is found in the cytoplasm. The protein localises to the cytoskeleton. Its subcellular location is the nucleus. The protein resides in the spindle. In terms of biological role, microtubule binding protein that promotes the stabilization of dynamic microtubules. Required for mitotic spindle formation. The chain is Protein STU1 (STU1) from Yarrowia lipolytica (strain CLIB 122 / E 150) (Yeast).